Consider the following 93-residue polypeptide: Em protein H2 (93 aa).

A disordered region spans residues Met1 to Ser93. 3 stretches are compositionally biased toward basic and acidic residues: residues Ser9 to Glu19, Leu31 to Met52, and Gly73 to Ser93.

The protein belongs to the small hydrophilic plant seed protein family.

Functionally, it is thought to provide protection for the cytoplasm during the desiccation stage of embryo development. The sequence is that of Em protein H2 (EMH2) from Triticum aestivum (Wheat).